We begin with the raw amino-acid sequence, 277 residues long: 4-hydroxy-tetrahydrodipicolinate reductase (277 aa).

NAD(+)-binding positions include 11 to 16 (GALGRM) and 110 to 112 (GTT). Catalysis depends on histidine 166, which acts as the Proton donor/acceptor. A (S)-2,3,4,5-tetrahydrodipicolinate-binding site is contributed by histidine 167. Catalysis depends on lysine 170, which acts as the Proton donor. Position 176-177 (176-177 (GT)) interacts with (S)-2,3,4,5-tetrahydrodipicolinate.

This sequence belongs to the DapB family.

It is found in the cytoplasm. The enzyme catalyses (S)-2,3,4,5-tetrahydrodipicolinate + NAD(+) + H2O = (2S,4S)-4-hydroxy-2,3,4,5-tetrahydrodipicolinate + NADH + H(+). The catalysed reaction is (S)-2,3,4,5-tetrahydrodipicolinate + NADP(+) + H2O = (2S,4S)-4-hydroxy-2,3,4,5-tetrahydrodipicolinate + NADPH + H(+). Its pathway is amino-acid biosynthesis; L-lysine biosynthesis via DAP pathway; (S)-tetrahydrodipicolinate from L-aspartate: step 4/4. Its function is as follows. Catalyzes the conversion of 4-hydroxy-tetrahydrodipicolinate (HTPA) to tetrahydrodipicolinate. The polypeptide is 4-hydroxy-tetrahydrodipicolinate reductase (Parasynechococcus marenigrum (strain WH8102)).